The primary structure comprises 156 residues: Ribosome maturation factor RimP (156 aa).

The protein belongs to the RimP family.

It localises to the cytoplasm. In terms of biological role, required for maturation of 30S ribosomal subunits. This is Ribosome maturation factor RimP from Bacillus cytotoxicus (strain DSM 22905 / CIP 110041 / 391-98 / NVH 391-98).